The following is a 382-amino-acid chain: Biotin synthase (382 aa).

Residues 83–318 form the Radical SAM core domain; it reads CCGNVVDLCS…EQILRYAGGR (236 aa). Residues cysteine 101, cysteine 105, and cysteine 108 each contribute to the [4Fe-4S] cluster site. The [2Fe-2S] cluster site is built by cysteine 146, cysteine 183, cysteine 243, and arginine 313.

Belongs to the radical SAM superfamily. Biotin synthase family. As to quaternary structure, homodimer. [4Fe-4S] cluster serves as cofactor. It depends on [2Fe-2S] cluster as a cofactor.

The enzyme catalyses (4R,5S)-dethiobiotin + (sulfur carrier)-SH + 2 reduced [2Fe-2S]-[ferredoxin] + 2 S-adenosyl-L-methionine = (sulfur carrier)-H + biotin + 2 5'-deoxyadenosine + 2 L-methionine + 2 oxidized [2Fe-2S]-[ferredoxin]. It participates in cofactor biosynthesis; biotin biosynthesis; biotin from 7,8-diaminononanoate: step 2/2. Catalyzes the conversion of dethiobiotin (DTB) to biotin by the insertion of a sulfur atom into dethiobiotin via a radical-based mechanism. This Crocosphaera subtropica (strain ATCC 51142 / BH68) (Cyanothece sp. (strain ATCC 51142)) protein is Biotin synthase.